A 564-amino-acid polypeptide reads, in one-letter code: Kelch-like protein 12 (564 aa).

Residues 29 to 96 (CDITLRVEGT…VYTETVLVTV (68 aa)) form the BTB domain. The BACK domain occupies 131 to 232 (CLGIRDFAET…LTPRYITDVI (102 aa)). Kelch repeat units follow at residues 278 to 325 (VLLV…ALND), 327 to 375 (VYVI…TLGD), 376 to 422 (MIYV…VASG), 423 to 469 (LIYC…LLND), 471 to 516 (IYVV…VLRG), and 518 to 563 (LYAI…VLRE).

Component of the BCR(KLHL12) E3 ubiquitin ligase complex.

The protein localises to the cytoplasmic vesicle. The protein resides in the COPII-coated vesicle. It participates in protein modification; protein ubiquitination. Substrate-specific adapter of a BCR (BTB-CUL3-RBX1) E3 ubiquitin ligase complex that acts as a negative regulator of Wnt signaling pathway and ER-Golgi transport. The BCR(KLHL12) complex is involved in ER-Golgi transport by regulating the size of COPII coats, thereby playing a key role in collagen export, which is required for embryonic stem (ES) cells division. Negatively regulates the Wnt signaling pathway, possibly via the targeted ubiquitination and subsequent proteolysis of dvl2 and dvl3. Regulates convergent-extension movements during early embryonic development. In Danio rerio (Zebrafish), this protein is Kelch-like protein 12 (klhl12).